Reading from the N-terminus, the 106-residue chain is L-rhamnose mutarotase (106 aa).

Substrate is bound at residue Tyr-20. The Proton donor role is filled by His-24. Substrate is bound by residues Tyr-43 and 78-79 (WW).

Belongs to the rhamnose mutarotase family. As to quaternary structure, homodimer.

The protein localises to the cytoplasm. It carries out the reaction alpha-L-rhamnose = beta-L-rhamnose. Its pathway is carbohydrate metabolism; L-rhamnose metabolism. Functionally, involved in the anomeric conversion of L-rhamnose. This is L-rhamnose mutarotase from Rhizobium johnstonii (strain DSM 114642 / LMG 32736 / 3841) (Rhizobium leguminosarum bv. viciae).